A 420-amino-acid polypeptide reads, in one-letter code: Glutamyl-tRNA reductase (420 aa).

Substrate contacts are provided by residues 49–52 (TCNR), Ser-109, 114–116 (EPQ), and Gln-120. Cys-50 acts as the Nucleophile in catalysis. 189 to 194 (GAGETI) is a binding site for NADP(+).

This sequence belongs to the glutamyl-tRNA reductase family. In terms of assembly, homodimer.

It carries out the reaction (S)-4-amino-5-oxopentanoate + tRNA(Glu) + NADP(+) = L-glutamyl-tRNA(Glu) + NADPH + H(+). It participates in porphyrin-containing compound metabolism; protoporphyrin-IX biosynthesis; 5-aminolevulinate from L-glutamyl-tRNA(Glu): step 1/2. Catalyzes the NADPH-dependent reduction of glutamyl-tRNA(Glu) to glutamate 1-semialdehyde (GSA). In Proteus mirabilis (strain HI4320), this protein is Glutamyl-tRNA reductase.